Here is a 224-residue protein sequence, read N- to C-terminus: uncharacterized protein (224 aa).

The first 16 residues, 1-16 (MKILYSFLLLPFFSCA), serve as a signal peptide directing secretion.

This is an uncharacterized protein from Escherichia coli.